The primary structure comprises 210 residues: Cytidylate kinase (210 aa).

Position 9–17 (9–17) interacts with ATP; the sequence is GPAAAGKGT.

This sequence belongs to the cytidylate kinase family. Type 1 subfamily.

The protein localises to the cytoplasm. The catalysed reaction is CMP + ATP = CDP + ADP. It catalyses the reaction dCMP + ATP = dCDP + ADP. The polypeptide is Cytidylate kinase (Agrobacterium fabrum (strain C58 / ATCC 33970) (Agrobacterium tumefaciens (strain C58))).